The chain runs to 229 residues: Demethylmenaquinone methyltransferase (229 aa).

S-adenosyl-L-methionine is bound by residues threonine 58, aspartate 78, and 100–101 (DA).

It belongs to the class I-like SAM-binding methyltransferase superfamily. MenG/UbiE family.

The catalysed reaction is a 2-demethylmenaquinol + S-adenosyl-L-methionine = a menaquinol + S-adenosyl-L-homocysteine + H(+). The protein operates within quinol/quinone metabolism; menaquinone biosynthesis; menaquinol from 1,4-dihydroxy-2-naphthoate: step 2/2. Its function is as follows. Methyltransferase required for the conversion of demethylmenaquinol (DMKH2) to menaquinol (MKH2). This chain is Demethylmenaquinone methyltransferase, found in Thermotoga maritima (strain ATCC 43589 / DSM 3109 / JCM 10099 / NBRC 100826 / MSB8).